The primary structure comprises 416 residues: Glutamyl-tRNA reductase (416 aa).

Substrate is bound by residues 49–52, Ser105, 110–112, and Gln116; these read TCNR and EPQ. The Nucleophile role is filled by Cys50. 185–190 is a binding site for NADP(+); that stretch reads GAGETI.

This sequence belongs to the glutamyl-tRNA reductase family. In terms of assembly, homodimer.

It carries out the reaction (S)-4-amino-5-oxopentanoate + tRNA(Glu) + NADP(+) = L-glutamyl-tRNA(Glu) + NADPH + H(+). It participates in porphyrin-containing compound metabolism; protoporphyrin-IX biosynthesis; 5-aminolevulinate from L-glutamyl-tRNA(Glu): step 1/2. Catalyzes the NADPH-dependent reduction of glutamyl-tRNA(Glu) to glutamate 1-semialdehyde (GSA). This Shewanella sp. (strain MR-7) protein is Glutamyl-tRNA reductase.